The following is an 856-amino-acid chain: Envelope glycoprotein gp150 (856 aa).

Over 1–785 (MAEGFVANGQ…WIGNIPQYLK (785 aa)) the chain is Extracellular. Asn-220, Asn-258, Asn-269, Asn-274, Asn-298, Asn-330, Asn-336, Asn-342, Asn-418, Asn-422, Asn-448, Asn-469, Asn-481, Asn-499, Asn-518, Asn-531, Asn-548, Asn-551, and Asn-556 each carry an N-linked (GlcNAc...) asparagine; by host glycan. Residues 616–636 (VMLALATVLSMAGAGTGATAI) are fusion peptide. Positions 643–693 (HQVLATQQEAIEKVTEALKITNLRLVTLEHQVLVIGLKVEAMEKFLYTAFA) form a coiled coil. The segment at 662–680 (ITNLRLVTLEHQVLVIGLK) is immunosuppression. N-linked (GlcNAc...) asparagine; by host glycosylation is found at Asn-717, Asn-721, Asn-729, and Asn-737. Residues 736–772 (YNQTKDLQKKFYGIIMDIEQNNVQGKKGLQQLQKWED) adopt a coiled-coil conformation. The helical transmembrane segment at 786-806 (GLLGSIVGIGLGILLLILCLP) threads the bilayer. Residues 807 to 856 (TLVDCIRNCIHKILGYTVIAMPEVDGEEIQPQMELRRNGRQCGMSEKEEE) are Cytoplasmic-facing.

In terms of assembly, the mature envelope protein (Env) consists of a trimer of SU-TM heterodimers attached by noncovalent interactions or by a labile interchain disulfide bond. Specific enzymatic cleavages in vivo yield mature proteins. Envelope glycoproteins are synthesized as an inactive precursor that is N-glycosylated and processed likely by host cell furin or by a furin-like protease in the Golgi to yield the mature SU and TM proteins. The cleavage site between SU and TM requires the minimal sequence [KR]-X-[KR]-R.

It localises to the virion membrane. Its subcellular location is the host cell membrane. The surface protein (SU) attaches the virus to the host cell by binding to its receptor. This interaction triggers the refolding of the transmembrane protein (TM) and is thought to activate its fusogenic potential by unmasking its fusion peptide. Fusion occurs at the host cell plasma membrane. Functionally, the transmembrane protein (TM) acts as a class I viral fusion protein. Under the current model, the protein has at least 3 conformational states: pre-fusion native state, pre-hairpin intermediate state, and post-fusion hairpin state. During viral and target cell membrane fusion, the coiled coil regions (heptad repeats) assume a trimer-of-hairpins structure, positioning the fusion peptide in close proximity to the C-terminal region of the ectodomain. The formation of this structure appears to drive apposition and subsequent fusion of viral and target cell membranes. Membranes fusion leads to delivery of the nucleocapsid into the cytoplasm. The sequence is that of Envelope glycoprotein gp150 (env) from Feline immunodeficiency virus (strain UT-113) (FIV).